We begin with the raw amino-acid sequence, 183 residues long: ATP synthase subunit delta (183 aa).

The protein belongs to the ATPase delta chain family. As to quaternary structure, F-type ATPases have 2 components, F(1) - the catalytic core - and F(0) - the membrane proton channel. F(1) has five subunits: alpha(3), beta(3), gamma(1), delta(1), epsilon(1). F(0) has three main subunits: a(1), b(2) and c(10-14). The alpha and beta chains form an alternating ring which encloses part of the gamma chain. F(1) is attached to F(0) by a central stalk formed by the gamma and epsilon chains, while a peripheral stalk is formed by the delta and b chains.

Its subcellular location is the cell inner membrane. In terms of biological role, f(1)F(0) ATP synthase produces ATP from ADP in the presence of a proton or sodium gradient. F-type ATPases consist of two structural domains, F(1) containing the extramembraneous catalytic core and F(0) containing the membrane proton channel, linked together by a central stalk and a peripheral stalk. During catalysis, ATP synthesis in the catalytic domain of F(1) is coupled via a rotary mechanism of the central stalk subunits to proton translocation. Functionally, this protein is part of the stalk that links CF(0) to CF(1). It either transmits conformational changes from CF(0) to CF(1) or is implicated in proton conduction. The chain is ATP synthase subunit delta from Thermosipho africanus (strain TCF52B).